An 894-amino-acid chain; its full sequence is GTPase-activating protein GYP5 (894 aa).

Positions 1-23 are enriched in basic and acidic residues; it reads MSSDKSIEKNTDTIASEVHEGDN. Residues 1–324 are disordered; it reads MSSDKSIEKN…VPPPLEEEMK (324 aa). S25 and S30 each carry phosphoserine. T89 carries the phosphothreonine modification. Residues 134–164 are compositionally biased toward basic and acidic residues; sequence IEKEYDAVKENEKVYADTKEVVSSPENREVT. Composition is skewed to polar residues over residues 184–200 and 268–279; these read GTTTAANANDISISSEV and SSENEVSAIPTT. S389 bears the Phosphoserine mark. One can recognise a Rab-GAP TBC domain in the interval 451–630; that stretch reads GIPPQIRGII…RIFDIVFVEG (180 aa). Positions 732–872 form a coiled coil; the sequence is EKEQKKEDHY…INKEQVSTAS (141 aa).

This sequence belongs to the GYP5 family. In terms of assembly, interacts with GYL1 and RVS167; and is part of SEC4-containing complexes.

It localises to the cytoplasm. The protein localises to the bud. Its subcellular location is the bud neck. In terms of biological role, GTPase-activating protein which accelerates the GTP hydrolysis rate of YPT1 and SEC4. Involved in ER to Golgi trafficking and polarized exocytosis. This Saccharomyces cerevisiae (strain ATCC 204508 / S288c) (Baker's yeast) protein is GTPase-activating protein GYP5 (GYP5).